Here is a 217-residue protein sequence, read N- to C-terminus: N-(5'-phosphoribosyl)anthranilate isomerase (217 aa).

The protein belongs to the TrpF family.

It catalyses the reaction N-(5-phospho-beta-D-ribosyl)anthranilate = 1-(2-carboxyphenylamino)-1-deoxy-D-ribulose 5-phosphate. The protein operates within amino-acid biosynthesis; L-tryptophan biosynthesis; L-tryptophan from chorismate: step 3/5. This Chlorobium phaeovibrioides (strain DSM 265 / 1930) (Prosthecochloris vibrioformis (strain DSM 265)) protein is N-(5'-phosphoribosyl)anthranilate isomerase.